The chain runs to 128 residues: UPF0212 protein TGAM_1344 (128 aa).

It belongs to the UPF0212 family.

This chain is UPF0212 protein TGAM_1344, found in Thermococcus gammatolerans (strain DSM 15229 / JCM 11827 / EJ3).